The primary structure comprises 199 residues: Phosphoheptose isomerase (199 aa).

The SIS domain occupies 36–198; sequence MAQCLLNEHK…DRKLIPSSED (163 aa). 51–53 lines the substrate pocket; it reads NGG. Zn(2+) contacts are provided by H60 and E64. Substrate is bound by residues E64, 93–94, 119–121, S124, and Q174; these read ND and STS. Q174 and H182 together coordinate Zn(2+).

Belongs to the SIS family. GmhA subfamily. As to quaternary structure, homotetramer. Requires Zn(2+) as cofactor.

Its subcellular location is the cytoplasm. It carries out the reaction 2 D-sedoheptulose 7-phosphate = D-glycero-alpha-D-manno-heptose 7-phosphate + D-glycero-beta-D-manno-heptose 7-phosphate. It functions in the pathway carbohydrate biosynthesis; D-glycero-D-manno-heptose 7-phosphate biosynthesis; D-glycero-alpha-D-manno-heptose 7-phosphate and D-glycero-beta-D-manno-heptose 7-phosphate from sedoheptulose 7-phosphate: step 1/1. In terms of biological role, catalyzes the isomerization of sedoheptulose 7-phosphate in D-glycero-D-manno-heptose 7-phosphate. The protein is Phosphoheptose isomerase of Coxiella burnetii (strain CbuK_Q154) (Coxiella burnetii (strain Q154)).